A 317-amino-acid chain; its full sequence is Transaldolase (317 aa).

The active-site Schiff-base intermediate with substrate is Lys126.

The protein belongs to the transaldolase family. Type 1 subfamily. Homodimer.

The protein resides in the cytoplasm. It catalyses the reaction D-sedoheptulose 7-phosphate + D-glyceraldehyde 3-phosphate = D-erythrose 4-phosphate + beta-D-fructose 6-phosphate. It participates in carbohydrate degradation; pentose phosphate pathway; D-glyceraldehyde 3-phosphate and beta-D-fructose 6-phosphate from D-ribose 5-phosphate and D-xylulose 5-phosphate (non-oxidative stage): step 2/3. Transaldolase is important for the balance of metabolites in the pentose-phosphate pathway. The chain is Transaldolase from Burkholderia multivorans (strain ATCC 17616 / 249).